The sequence spans 312 residues: DNA-directed RNA polymerase subunit alpha (312 aa).

Residues 1–229 are alpha N-terminal domain (alpha-NTD); it reads MLQYQIDRIE…ELFQPLATVT (229 aa). Positions 239-312 are alpha C-terminal domain (alpha-CTD); sequence EPTAEAQIPL…IQIPQSRTSA (74 aa).

Belongs to the RNA polymerase alpha chain family. In terms of assembly, in cyanobacteria the RNAP catalytic core is composed of 2 alpha, 1 beta, 1 beta', 1 gamma and 1 omega subunit. When a sigma factor is associated with the core the holoenzyme is formed, which can initiate transcription.

The catalysed reaction is RNA(n) + a ribonucleoside 5'-triphosphate = RNA(n+1) + diphosphate. DNA-dependent RNA polymerase catalyzes the transcription of DNA into RNA using the four ribonucleoside triphosphates as substrates. The chain is DNA-directed RNA polymerase subunit alpha from Synechococcus sp. (strain WH7803).